Reading from the N-terminus, the 565-residue chain is Sulfite reductase [NADPH] hemoprotein beta-component (565 aa).

4 residues coordinate [4Fe-4S] cluster: Cys-429, Cys-435, Cys-474, and Cys-478. Cys-478 contacts siroheme.

This sequence belongs to the nitrite and sulfite reductase 4Fe-4S domain family. In terms of assembly, alpha(8)-beta(8). The alpha component is a flavoprotein, the beta component is a hemoprotein. Requires siroheme as cofactor. [4Fe-4S] cluster is required as a cofactor.

The catalysed reaction is hydrogen sulfide + 3 NADP(+) + 3 H2O = sulfite + 3 NADPH + 4 H(+). It functions in the pathway sulfur metabolism; hydrogen sulfide biosynthesis; hydrogen sulfide from sulfite (NADPH route): step 1/1. In terms of biological role, component of the sulfite reductase complex that catalyzes the 6-electron reduction of sulfite to sulfide. This is one of several activities required for the biosynthesis of L-cysteine from sulfate. The protein is Sulfite reductase [NADPH] hemoprotein beta-component of Shewanella sp. (strain MR-7).